Here is a 299-residue protein sequence, read N- to C-terminus: ATP phosphoribosyltransferase (299 aa).

The protein belongs to the ATP phosphoribosyltransferase family. Long subfamily. In terms of assembly, equilibrium between an active dimeric form, an inactive hexameric form and higher aggregates. Interconversion between the various forms is largely reversible and is influenced by the natural substrates and inhibitors of the enzyme. Requires Mg(2+) as cofactor.

It is found in the cytoplasm. It catalyses the reaction 1-(5-phospho-beta-D-ribosyl)-ATP + diphosphate = 5-phospho-alpha-D-ribose 1-diphosphate + ATP. The protein operates within amino-acid biosynthesis; L-histidine biosynthesis; L-histidine from 5-phospho-alpha-D-ribose 1-diphosphate: step 1/9. Its activity is regulated as follows. Feedback inhibited by histidine. Functionally, catalyzes the condensation of ATP and 5-phosphoribose 1-diphosphate to form N'-(5'-phosphoribosyl)-ATP (PR-ATP). Has a crucial role in the pathway because the rate of histidine biosynthesis seems to be controlled primarily by regulation of HisG enzymatic activity. The protein is ATP phosphoribosyltransferase of Salmonella enteritidis PT4 (strain P125109).